Here is a 175-residue protein sequence, read N- to C-terminus: Threonylcarbamoyl-AMP synthase (175 aa).

Residues 1–175 (MLHNDDVIAY…IINGKLIRYV (175 aa)) form the YrdC-like domain.

The protein belongs to the SUA5 family. TsaC subfamily.

Its subcellular location is the cytoplasm. It carries out the reaction L-threonine + hydrogencarbonate + ATP = L-threonylcarbamoyladenylate + diphosphate + H2O. Functionally, required for the formation of a threonylcarbamoyl group on adenosine at position 37 (t(6)A37) in tRNAs that read codons beginning with adenine. Catalyzes the conversion of L-threonine, HCO(3)(-)/CO(2) and ATP to give threonylcarbamoyl-AMP (TC-AMP) as the acyladenylate intermediate, with the release of diphosphate. This is Threonylcarbamoyl-AMP synthase from Buchnera aphidicola subsp. Acyrthosiphon pisum (strain APS) (Acyrthosiphon pisum symbiotic bacterium).